The following is a 459-amino-acid chain: Cysteine--tRNA ligase (459 aa).

Cys-29 contacts Zn(2+). Residues 31 to 41 (PTVYDRAHIGN) carry the 'HIGH' region motif. The Zn(2+) site is built by Cys-209, His-234, and Glu-238. The 'KMSKS' region signature appears at 267-271 (KMSKS). An ATP-binding site is contributed by Lys-270.

Belongs to the class-I aminoacyl-tRNA synthetase family. As to quaternary structure, monomer. Zn(2+) is required as a cofactor.

Its subcellular location is the cytoplasm. It carries out the reaction tRNA(Cys) + L-cysteine + ATP = L-cysteinyl-tRNA(Cys) + AMP + diphosphate. This Rhodospirillum rubrum (strain ATCC 11170 / ATH 1.1.1 / DSM 467 / LMG 4362 / NCIMB 8255 / S1) protein is Cysteine--tRNA ligase.